Reading from the N-terminus, the 708-residue chain is Ion-translocating oxidoreductase complex subunit C (708 aa).

4Fe-4S ferredoxin-type domains follow at residues 369-397 (GEPQ…QQLY) and 407-436 (KATT…VQYF). The [4Fe-4S] cluster site is built by C377, C380, C383, C387, C416, C419, C422, and C426. The disordered stretch occupies residues 630 to 682 (AKARKLEQQQANAEPEEQIDPRKAAVEAAIARAKARKLEQQQANAEPEEQIDP).

This sequence belongs to the 4Fe4S bacterial-type ferredoxin family. RnfC subfamily. As to quaternary structure, the complex is composed of six subunits: RsxA, RsxB, RsxC, RsxD, RsxE and RsxG. The cofactor is [4Fe-4S] cluster.

The protein resides in the cell inner membrane. Its function is as follows. Part of a membrane-bound complex that couples electron transfer with translocation of ions across the membrane. Required to maintain the reduced state of SoxR. This is Ion-translocating oxidoreductase complex subunit C from Escherichia coli O1:K1 / APEC.